The primary structure comprises 320 residues: Transcription factor MYB80 (320 aa).

2 consecutive HTH myb-type domains span residues 9–65 (KENV…RPDL) and 66–116 (KHGQ…KKKL). DNA-binding regions (H-T-H motif) lie at residues 37–61 (WRLI…TNYL) and 89–112 (WSLI…NTKL). Positions 257–283 (TAAAEEEERRKLKGEVVDQEEIGSEGG) are disordered. Residues 263-272 (EERRKLKGEV) are compositionally biased toward basic and acidic residues.

In terms of tissue distribution, expressed in the tapetum and middle layer of developing anthers. Expressed in trichomes.

It is found in the nucleus. Functionally, transcription factor that binds to the DNA sequence 5'-CCAACC-3'. Regulates directly PME5, UND and GLOX1. Essential for tapetum development in anthers and microsporogenesis. Regulates the timing of tapetal programmed cell death (PCD) which is critical for pollen development. May act through the activation of UND, encoding an A1 aspartic protease. Required for anther development by regulating tapetum development, callose dissolution and exine formation. Acts upstream of A6 and FAR2/MS2, two genes required for pollen exine formation. Negatively regulates trichome endoreduplication and trichome branching. This is Transcription factor MYB80 from Arabidopsis thaliana (Mouse-ear cress).